The chain runs to 170 residues: Cyclic pyranopterin monophosphate synthase (170 aa).

Residues M75–H77 and M115–E116 contribute to the substrate site. D130 is an active-site residue.

It belongs to the MoaC family. As to quaternary structure, homohexamer; trimer of dimers.

It carries out the reaction (8S)-3',8-cyclo-7,8-dihydroguanosine 5'-triphosphate = cyclic pyranopterin phosphate + diphosphate. It functions in the pathway cofactor biosynthesis; molybdopterin biosynthesis. In terms of biological role, catalyzes the conversion of (8S)-3',8-cyclo-7,8-dihydroguanosine 5'-triphosphate to cyclic pyranopterin monophosphate (cPMP). The protein is Cyclic pyranopterin monophosphate synthase of Bacillus subtilis (strain 168).